The following is a 273-amino-acid chain: Putative phosphoenolpyruvate synthase regulatory protein (273 aa).

An ADP-binding site is contributed by 154–161 (GVSRSGKT).

Belongs to the pyruvate, phosphate/water dikinase regulatory protein family. PSRP subfamily.

It carries out the reaction [pyruvate, water dikinase] + ADP = [pyruvate, water dikinase]-phosphate + AMP + H(+). The enzyme catalyses [pyruvate, water dikinase]-phosphate + phosphate + H(+) = [pyruvate, water dikinase] + diphosphate. Functionally, bifunctional serine/threonine kinase and phosphorylase involved in the regulation of the phosphoenolpyruvate synthase (PEPS) by catalyzing its phosphorylation/dephosphorylation. The sequence is that of Putative phosphoenolpyruvate synthase regulatory protein from Neisseria meningitidis serogroup C (strain 053442).